Here is a 195-residue protein sequence, read N- to C-terminus: Chromophore lyase CpcT/CpeT 2 (195 aa).

The protein belongs to the CpcT/CpeT biliprotein lyase family.

Covalently attaches a chromophore to Cys residue(s) of phycobiliproteins. This Trichodesmium erythraeum (strain IMS101) protein is Chromophore lyase CpcT/CpeT 2.